Consider the following 471-residue polypeptide: UDP-N-acetylmuramate--L-alanine ligase (471 aa).

Residue 114 to 120 (GTHGKTT) coordinates ATP.

Belongs to the MurCDEF family.

The protein resides in the cytoplasm. The catalysed reaction is UDP-N-acetyl-alpha-D-muramate + L-alanine + ATP = UDP-N-acetyl-alpha-D-muramoyl-L-alanine + ADP + phosphate + H(+). It participates in cell wall biogenesis; peptidoglycan biosynthesis. Cell wall formation. The protein is UDP-N-acetylmuramate--L-alanine ligase of Rhizobium johnstonii (strain DSM 114642 / LMG 32736 / 3841) (Rhizobium leguminosarum bv. viciae).